Consider the following 223-residue polypeptide: Trichome differentiation protein GL1 (223 aa).

2 HTH myb-type domains span residues 11 to 63 (NQEY…MNYL) and 64 to 118 (SPNV…SKKL). 2 DNA-binding regions (H-T-H motif) span residues 39-63 (WNRI…MNYL) and 91-114 (WSLI…NTHL).

Its subcellular location is the nucleus. Regulates the production of a signal that induces hair (trichome) precursor cells on leaf primordia to differentiate. This chain is Trichome differentiation protein GL1 (GL1), found in Arabidopsis lyrata (Lyre-leaved rock-cress).